The following is a 185-amino-acid chain: Ribosome-recycling factor (185 aa).

It belongs to the RRF family.

The protein localises to the cytoplasm. Responsible for the release of ribosomes from messenger RNA at the termination of protein biosynthesis. May increase the efficiency of translation by recycling ribosomes from one round of translation to another. This Thioalkalivibrio sulfidiphilus (strain HL-EbGR7) protein is Ribosome-recycling factor.